An 881-amino-acid chain; its full sequence is Sodium/sulfate cotransporter 1 (881 aa).

Transmembrane regions (helical) follow at residues 8 to 28 (GIVA…DWVG), 31 to 51 (ITFT…VTVA), 61 to 81 (GLLT…TGGL), 107 to 127 (MVLS…PILI), 140 to 160 (LLIP…IGTS), and 186 to 206 (IFDI…FILL). 4 RCK C-terminal domains span residues 212–296 (LPGN…EYGL), 318–402 (VFSA…IKTN), 407–492 (LHAV…FPGL), and 498–584 (EQVD…DKSF). Transmembrane regions (helical) follow at residues 601–621 (MIIG…GGLK), 625–645 (YIHL…TGCM), 658–678 (VYLT…TGVA), 684–704 (AIIS…AIYI), 775–795 (FAIV…FILV), and 803–823 (VWIV…LYFL). The interval 854-881 (SLRRQVSHTRTDDSGSSGSPLPAPKIVA) is disordered.

Belongs to the divalent anion:Na+ symporter (DASS) superfamily. Na+/sulfate symporter (TC 2.A.47.4) family.

The protein localises to the cell membrane. Its function is as follows. Na(+)/sulfate cotransporter with a probable high-affinity for sulfate and a proteasome dependent turnover. The chain is Sodium/sulfate cotransporter 1 (SLT1) from Chlamydomonas reinhardtii (Chlamydomonas smithii).